Here is a 488-residue protein sequence, read N- to C-terminus: Probable malate:quinone oxidoreductase (488 aa).

It belongs to the MQO family. It depends on FAD as a cofactor.

It catalyses the reaction (S)-malate + a quinone = a quinol + oxaloacetate. It participates in carbohydrate metabolism; tricarboxylic acid cycle; oxaloacetate from (S)-malate (quinone route): step 1/1. This is Probable malate:quinone oxidoreductase from Neisseria meningitidis serogroup B (strain ATCC BAA-335 / MC58).